The sequence spans 198 residues: Peptidyl-tRNA hydrolase (198 aa).

A tRNA-binding site is contributed by Tyr15. The active-site Proton acceptor is the His20. Positions 66, 68, and 114 each coordinate tRNA.

The protein belongs to the PTH family. In terms of assembly, monomer.

It localises to the cytoplasm. The enzyme catalyses an N-acyl-L-alpha-aminoacyl-tRNA + H2O = an N-acyl-L-amino acid + a tRNA + H(+). Hydrolyzes ribosome-free peptidyl-tRNAs (with 1 or more amino acids incorporated), which drop off the ribosome during protein synthesis, or as a result of ribosome stalling. Its function is as follows. Catalyzes the release of premature peptidyl moieties from peptidyl-tRNA molecules trapped in stalled 50S ribosomal subunits, and thus maintains levels of free tRNAs and 50S ribosomes. In Cupriavidus metallidurans (strain ATCC 43123 / DSM 2839 / NBRC 102507 / CH34) (Ralstonia metallidurans), this protein is Peptidyl-tRNA hydrolase.